Here is a 97-residue protein sequence, read N- to C-terminus: Protein RnfH (97 aa).

The protein belongs to the UPF0125 (RnfH) family.

The sequence is that of Protein RnfH from Proteus mirabilis (strain HI4320).